The primary structure comprises 61 residues: Large ribosomal subunit protein uL30 (61 aa).

The protein belongs to the universal ribosomal protein uL30 family. In terms of assembly, part of the 50S ribosomal subunit.

The sequence is that of Large ribosomal subunit protein uL30 from Chlorobium phaeobacteroides (strain BS1).